The primary structure comprises 373 residues: Protein SENSITIVE TO PROTON RHIZOTOXICITY 2 (373 aa).

2 consecutive C2H2-type zinc fingers follow at residues 217 to 239 (HYCQ…MRAH) and 327 to 362 (KHCG…VPAH).

Expressed at low levels in roots (e.g. root tips and lateral roots), leaves (e.g. at the edge of mature leaves, possibly in hydathodes, and in vascular bundles), flowers (e.g. floral filaments), stems, siliques and cotyledons.

Its subcellular location is the nucleus. Probable transcription factor. Together with STOP1, plays a critical role in tolerance to major stress factors in acid soils such as proton H(+) and aluminum ion Al(3+). Required for the expression of genes in response to acidic stress (e.g. ALMT1 and MATE), and Al-activated citrate exudation. The polypeptide is Protein SENSITIVE TO PROTON RHIZOTOXICITY 2 (Arabidopsis thaliana (Mouse-ear cress)).